Reading from the N-terminus, the 130-residue chain is Small ribosomal subunit protein uS8 (130 aa).

Belongs to the universal ribosomal protein uS8 family. Part of the 30S ribosomal subunit. Contacts proteins S5 and S12.

In terms of biological role, one of the primary rRNA binding proteins, it binds directly to 16S rRNA central domain where it helps coordinate assembly of the platform of the 30S subunit. The sequence is that of Small ribosomal subunit protein uS8 from Actinobacillus succinogenes (strain ATCC 55618 / DSM 22257 / CCUG 43843 / 130Z).